Consider the following 207-residue polypeptide: Protein THEM6 (207 aa).

The N-terminal stretch at 1-21 is a signal peptide; it reads MLELLVASLSLALAFFALLDG. Residue Asn-188 is glycosylated (N-linked (GlcNAc...) asparagine). Ser-199 carries the post-translational modification Phosphoserine.

The protein belongs to the THEM6 family.

It localises to the secreted. This is Protein THEM6 (Them6) from Mus musculus (Mouse).